Consider the following 518-residue polypeptide: Chromosomal replication initiator protein DnaA (518 aa).

Positions 1 to 76 (METDGGDFPS…RALSEAYGSP (76 aa)) are domain I, interacts with DnaA modulators. The segment at 76 to 176 (PIRLAVTVDP…RRPTTRIENS (101 aa)) is domain II. Residues 91–174 (LTPERTGEHS…QPRRPTTRIE (84 aa)) form a disordered region. The segment covering 124–135 (DGLHLDERRSGS) has biased composition (basic and acidic residues). Positions 136–147 (LEEDSPLDDSDP) are enriched in acidic residues. The domain III, AAA+ region stretch occupies residues 177 to 393 (RLNPKYIFET…GALIRVTAFA (217 aa)). ATP contacts are provided by Gly221, Gly223, Lys224, and Thr225. Residues 394–518 (SLNRQPVDMQ…TNRIKKQSGA (125 aa)) are domain IV, binds dsDNA.

This sequence belongs to the DnaA family. In terms of assembly, oligomerizes as a right-handed, spiral filament on DNA at oriC.

It is found in the cytoplasm. Functionally, plays an essential role in the initiation and regulation of chromosomal replication. ATP-DnaA binds to the origin of replication (oriC) to initiate formation of the DNA replication initiation complex once per cell cycle. Binds the DnaA box (a 9 base pair repeat at the origin) and separates the double-stranded (ds)DNA. Forms a right-handed helical filament on oriC DNA; dsDNA binds to the exterior of the filament while single-stranded (ss)DNA is stabiized in the filament's interior. The ATP-DnaA-oriC complex binds and stabilizes one strand of the AT-rich DNA unwinding element (DUE), permitting loading of DNA polymerase. After initiation quickly degrades to an ADP-DnaA complex that is not apt for DNA replication. Binds acidic phospholipids. This chain is Chromosomal replication initiator protein DnaA, found in Kineococcus radiotolerans (strain ATCC BAA-149 / DSM 14245 / SRS30216).